A 640-amino-acid chain; its full sequence is Choline O-acetyltransferase (640 aa).

Over residues 1 to 22 (MPDLEKDMQKKEKDSRSKDEPA) the composition is skewed to basic and acidic residues. Residues 1 to 28 (MPDLEKDMQKKEKDSRSKDEPAVPKLPV) are disordered. Catalysis depends on His334, which acts as the Proton acceptor. CoA-binding positions include 412–424 (GKEFIKKQKTSPD), Ser450, and Gln551.

It belongs to the carnitine/choline acetyltransferase family. As to expression, detected in brain and in embryonic retina.

It carries out the reaction choline + acetyl-CoA = acetylcholine + CoA. Catalyzes the reversible synthesis of acetylcholine (ACh) from acetyl CoA and choline at cholinergic synapses. In Gallus gallus (Chicken), this protein is Choline O-acetyltransferase (CHAT).